The sequence spans 223 residues: Triosephosphate isomerase (223 aa).

Residue 6 to 8 (NLK) coordinates substrate. His86 (electrophile) is an active-site residue. Glu151 (proton acceptor) is an active-site residue. Substrate is bound by residues Gly157 and Ser187.

It belongs to the triosephosphate isomerase family. Homodimer.

It localises to the cytoplasm. The catalysed reaction is D-glyceraldehyde 3-phosphate = dihydroxyacetone phosphate. It participates in carbohydrate biosynthesis; gluconeogenesis. It functions in the pathway carbohydrate degradation; glycolysis; D-glyceraldehyde 3-phosphate from glycerone phosphate: step 1/1. Involved in the gluconeogenesis. Catalyzes stereospecifically the conversion of dihydroxyacetone phosphate (DHAP) to D-glyceraldehyde-3-phosphate (G3P). This chain is Triosephosphate isomerase, found in Campylobacter jejuni subsp. doylei (strain ATCC BAA-1458 / RM4099 / 269.97).